The sequence spans 157 residues: Isotocin-neurophysin IT 1 (157 aa).

Residues 1–20 form the signal peptide; the sequence is MFGTSVSALCLLFLLSVCTA. Cys-21 and Cys-26 form a disulfide bridge. Residue Gly-29 is modified to Glycine amide. Cystine bridges form between Cys-42–Cys-86, Cys-45–Cys-59, Cys-53–Cys-76, Cys-60–Cys-66, Cys-93–Cys-106, Cys-100–Cys-118, and Cys-107–Cys-112.

It belongs to the vasopressin/oxytocin family. Seven disulfide bonds are present in neurophysin.

Its subcellular location is the secreted. Functionally, isotocin causes contraction of smooth muscles. The sequence is that of Isotocin-neurophysin IT 1 from Oncorhynchus keta (Chum salmon).